Reading from the N-terminus, the 95-residue chain is Defensin-like protein 247 (95 aa).

The N-terminal stretch at 1-24 (MKFAAIFLVTCVFFSLFSSNLSQG) is a signal peptide. Disulfide bonds link C37/C94, C48/C77, C56/C87, and C75/C89.

The protein belongs to the DEFL family.

The protein resides in the secreted. The sequence is that of Defensin-like protein 247 (SCRL6) from Arabidopsis thaliana (Mouse-ear cress).